The chain runs to 49 residues: Defensin Tm-AMP-D1.2 (49 aa).

Intrachain disulfides connect cysteine 3–cysteine 49, cysteine 14–cysteine 34, cysteine 20–cysteine 43, and cysteine 24–cysteine 45.

In terms of biological role, plant defense peptide. This Triticum monococcum (Einkorn wheat) protein is Defensin Tm-AMP-D1.2.